The sequence spans 333 residues: NADH-quinone oxidoreductase subunit H (333 aa).

8 consecutive transmembrane segments (helical) span residues 15–35 (FFIF…FVTY), 88–108 (FILA…VIPF), 117–137 (IGVG…GVLT), 159–179 (ISYE…TGSL), 191–211 (VWYI…AVAE), 241–261 (FFML…TVLF), 273–293 (FIPG…LFIW), and 313–333 (VLLP…ELFF).

This sequence belongs to the complex I subunit 1 family. In terms of assembly, NDH-1 is composed of 14 different subunits. Subunits NuoA, H, J, K, L, M, N constitute the membrane sector of the complex.

The protein resides in the cell membrane. The catalysed reaction is a quinone + NADH + 5 H(+)(in) = a quinol + NAD(+) + 4 H(+)(out). In terms of biological role, NDH-1 shuttles electrons from NADH, via FMN and iron-sulfur (Fe-S) centers, to quinones in the respiratory chain. The immediate electron acceptor for the enzyme in this species is believed to be ubiquinone. Couples the redox reaction to proton translocation (for every two electrons transferred, four hydrogen ions are translocated across the cytoplasmic membrane), and thus conserves the redox energy in a proton gradient. This subunit may bind ubiquinone. This Bacillus cytotoxicus (strain DSM 22905 / CIP 110041 / 391-98 / NVH 391-98) protein is NADH-quinone oxidoreductase subunit H.